Consider the following 220-residue polypeptide: LOB domain-containing protein 31 (220 aa).

Positions 10 to 112 constitute an LOB domain; that stretch reads GPCGACKFLR…AELAYVQTQL (103 aa). The disordered stretch occupies residues 117-172; that stretch reads GLPPPNSQNNSRTEAASSSNVPLISSVDSKDNMSSSSSHIPCMSQQQEQEQPKEAI. The segment covering 123-139 has biased composition (polar residues); that stretch reads SQNNSRTEAASSSNVPL.

It belongs to the LOB domain-containing protein family. As to expression, expressed in roots, stems and flowers.

In Arabidopsis thaliana (Mouse-ear cress), this protein is LOB domain-containing protein 31 (LBD31).